Here is an 84-residue protein sequence, read N- to C-terminus: Seminal ribonuclease (84 aa).

3 cysteine pairs are disulfide-bonded: Cys10–Cys65, Cys28–Cys80, and Cys35–Cys42. Residues 11 to 15 (KPVNT), Lys36, and Arg55 contribute to the substrate site.

Belongs to the pancreatic ribonuclease family. As to quaternary structure, homodimer; disulfide-linked.

The protein localises to the secreted. The catalysed reaction is an [RNA] containing cytidine + H2O = an [RNA]-3'-cytidine-3'-phosphate + a 5'-hydroxy-ribonucleotide-3'-[RNA].. It carries out the reaction an [RNA] containing uridine + H2O = an [RNA]-3'-uridine-3'-phosphate + a 5'-hydroxy-ribonucleotide-3'-[RNA].. The protein is Seminal ribonuclease (SRN) of Giraffa camelopardalis (Giraffe).